The primary structure comprises 346 residues: DNA ligase (346 aa).

ATP contacts are provided by residues 32 to 35 (DCKY), Arg-39, 55 to 57 (RVS), Glu-93, Glu-142, and Arg-149. The active-site N6-AMP-lysine intermediate is the Lys-34. Glu-223 lines the a divalent metal cation pocket. Lys-238 and Lys-244 together coordinate ATP.

It belongs to the ATP-dependent DNA ligase family. A divalent metal cation is required as a cofactor.

The catalysed reaction is ATP + (deoxyribonucleotide)n-3'-hydroxyl + 5'-phospho-(deoxyribonucleotide)m = (deoxyribonucleotide)n+m + AMP + diphosphate.. In terms of biological role, DNA ligase, which is expressed in the early stage of lytic development, has been implicated in T7 DNA synthesis and genetic recombination. It may also play a role in T7 DNA repair. This chain is DNA ligase (1.3), found in Enterobacteria phage T3 (Bacteriophage T3).